A 206-amino-acid polypeptide reads, in one-letter code: Ras-related protein Rab-7b (206 aa).

Gly15–Thr22 contributes to the GTP binding site. A phosphoserine mark is found at Ser17 and Ser23. Residues Thr34, Thr40, and Thr64 each carry the phosphothreonine modification. GTP contacts are provided by residues Thr34–Thr40 and Asp63–Gln67. The Effector region signature appears at Tyr37 to Phe45. Ser72 bears the Phosphoserine mark. Tyr78 and Tyr88 each carry phosphotyrosine. GTP contacts are provided by residues Asn125 to Asp128 and Ala157 to Lys158. 2 S-geranylgeranyl cysteine lipidation sites follow: Cys205 and Cys206.

The protein belongs to the small GTPase superfamily. Rab family. Post-translationally, glycosylated.

Its subcellular location is the cytoplasm. It localises to the cytoskeleton. This Paramecium octaurelia protein is Ras-related protein Rab-7b.